We begin with the raw amino-acid sequence, 140 residues long: Methylglyoxal synthase (140 aa).

The 140-residue stretch at 1-140 folds into the MGS-like domain; sequence MKIALIAHDR…HEGDRRPLAF (140 aa). Residues histidine 8, lysine 12, 34–37, and 54–55 each bind substrate; these read TGTT and SG. Aspartate 60 serves as the catalytic Proton donor/acceptor. Histidine 87 is a substrate binding site.

This sequence belongs to the methylglyoxal synthase family.

It carries out the reaction dihydroxyacetone phosphate = methylglyoxal + phosphate. In terms of biological role, catalyzes the formation of methylglyoxal from dihydroxyacetone phosphate. The protein is Methylglyoxal synthase of Enterococcus faecalis (strain ATCC 700802 / V583).